The following is a 523-amino-acid chain: Uridylate cyclase (523 aa).

Guanylate cyclase domains are found at residues 69–209 (VHVY…AKLA) and 318–438 (MSIF…IGIR). Residues tyrosine 72 and arginine 125 each coordinate a ribonucleoside 5'-triphosphate. The Mn(2+) site is built by aspartate 323, isoleucine 324, and aspartate 372.

Belongs to the adenylyl cyclase class-4/guanylyl cyclase family. Pyrimidine cyclase subfamily. In terms of assembly, monomer. Requires Mn(2+) as cofactor.

Its subcellular location is the cytoplasm. The enzyme catalyses UTP = 3',5'-cyclic UMP + diphosphate. Its function is as follows. Pycsar (pyrimidine cyclase system for antiphage resistance) provides immunity against bacteriophage. The pyrimidine cyclase (PycC) synthesizes cyclic nucleotides in response to infection; these serve as specific second messenger signals. The signals activate the nearby effector, leading to bacterial cell death and abortive phage infection. A clade A Pycsar system. Functionally, the pyrimidine cyclase gene of a two-gene Pycsar system, generates cyclic UMP (cUMP) from UTP, has little to no activity on ATP, CTP or GTP. Expression of this and effector RsPycTM (AC A0A4R2UGS4) probably confers resistance to some bacteriophage. The genes are probably only expressed in response to bacteriophage infection. The protein is Uridylate cyclase of Rhizobium sp. (strain PP-F2F-G36).